We begin with the raw amino-acid sequence, 345 residues long: Isopentenyl-diphosphate delta-isomerase (345 aa).

Residue R14–K15 coordinates substrate. Residues S71, S72–T74, S102, and N130 contribute to the FMN site. S102–R104 contacts substrate. Q165 provides a ligand contact to substrate. E166 provides a ligand contact to Mg(2+). FMN is bound by residues K197, T227, G277–K279, and A298–G299.

Belongs to the IPP isomerase type 2 family. In terms of assembly, homooctamer. Dimer of tetramers. FMN serves as cofactor. NADPH is required as a cofactor. It depends on Mg(2+) as a cofactor.

It is found in the cytoplasm. The catalysed reaction is isopentenyl diphosphate = dimethylallyl diphosphate. In terms of biological role, involved in the biosynthesis of isoprenoids. Catalyzes the 1,3-allylic rearrangement of the homoallylic substrate isopentenyl (IPP) to its allylic isomer, dimethylallyl diphosphate (DMAPP). The polypeptide is Isopentenyl-diphosphate delta-isomerase (Rickettsia felis (strain ATCC VR-1525 / URRWXCal2) (Rickettsia azadi)).